We begin with the raw amino-acid sequence, 630 residues long: SHC-transforming protein 4 (630 aa).

A CH2 region spans residues 1-185; it reads MRERGQDSLA…RQDRHFLQHL (185 aa). 2 disordered regions span residues 39-80 and 118-150; these read TSLD…QESP and KLQESRDPGSSGPSSPETSLSRSGTAPPPQQDL. Residues 125–142 are compositionally biased toward low complexity; sequence PGSSGPSSPETSLSRSGT. A PID domain is found at 186–369; sequence LGMGMNYCVR…VHIDSHAEER (184 aa). The tract at residues 370 to 525 is CH1; sequence EDHEYYNEIP…HIKQQLWSEE (156 aa). Tyr-424 carries the phosphotyrosine modification. Polar residues-rich tracts occupy residues 471-486 and 502-513; these read LQSTPGSAGNQRSAQP and PGATAQPASSHS. Residues 471 to 514 are disordered; the sequence is LQSTPGSAGNQRSAQPLGSPWHCGKAPETVQPGATAQPASSHSL. The region spanning 526 to 617 is the SH2 domain; it reads CYHGKLSRKA…GSEVSLKQPV (92 aa).

In terms of assembly, interacts (via PID domain) with phosphorylated MUSK (via NPXY motif); undergoes tyrosine phosphorylation downstream of activated MUSK. Interacts with GRB2; the interaction is dependent of Tyr-424 phosphorylation and increased by EGF. Post-translationally, phosphorylated; the phosphorylation is enhanced by EGF. Phosphorylation at Tyr-424 is required for the interaction with GRB2. As to expression, only expressed in melanomas. Weakly expressed in normal melanocytes and benign nevi. Highly expressed at the transition from radial growth phase to vertical growth phase and metastatic melanomas, when tumor cells acquire migratory competence and invasive potential.

The protein resides in the postsynaptic cell membrane. In terms of biological role, activates both Ras-dependent and Ras-independent migratory pathways in melanomas. Contributes to the early phases of agrin-induced tyrosine phosphorylation of CHRNB1. This Homo sapiens (Human) protein is SHC-transforming protein 4 (SHC4).